Reading from the N-terminus, the 997-residue chain is Signal peptide, CUB and EGF-like domain-containing protein 2 (997 aa).

An N-terminal signal peptide occupies residues 1–28 (MGVAGCGRPREARALLLLLLLLPPLLAA). An EGF-like 1; calcium-binding domain is found at 43-83 (DVDECAQGLDDCHADALCQNTPTSYKCSCKPGYQGEGRQCE). 8 disulfides stabilise this stretch: Cys-47–Cys-60, Cys-54–Cys-69, Cys-71–Cys-82, Cys-88–Cys-100, Cys-96–Cys-109, Cys-111–Cys-124, Cys-130–Cys-141, and Cys-137–Cys-150. The EGF-like 2; calcium-binding domain maps to 84–125 (DMDECDNTLNGGCVHDCLNIPGNYRCTCFDGFMLAHDGHNCL). In terms of domain architecture, EGF-like 3; calcium-binding spans 126–162 (DMDECLENNGGCQHICTNVIGSYECRCKEGFFLSDNQ). EGF-like domains lie at 175–211 (CMNKDHGCGHICKEAPRGSVACECRPGFELAKNQKDC), 215–250 (CNHGNGGCQHSCEDTAEGPECSCHPRYRLHADGRSC), and 284–319 (CAVNNGGCDRTCKDTSTGVHCSCPTGFTLQVDGKTC). Residues 321–361 (DIDECQTRNGGCNHFCKNTVGSFDCSCKKGFKLLTDEKSCQ) enclose the EGF-like 7; calcium-binding domain. 9 cysteine pairs are disulfide-bonded: Cys-325-Cys-336, Cys-332-Cys-345, Cys-347-Cys-360, Cys-366-Cys-376, Cys-372-Cys-385, Cys-387-Cys-399, Cys-405-Cys-416, Cys-412-Cys-425, and Cys-427-Cys-440. The EGF-like 8; calcium-binding domain maps to 362-400 (DVDECSLERTCDHSCINHPGTFICACNPGYTLYSFTHCG). The 41-residue stretch at 401–441 (DTNECSVNNGGCQQVCINTVGSYECQCHPGFKLHWNKKDCV) folds into the EGF-like 9; calcium-binding domain. Residue Asn-657 is glycosylated (N-linked (GlcNAc...) asparagine). Cysteines 807 and 833 form a disulfide. One can recognise a CUB domain in the interval 807 to 919 (CGGELGDFTG…RGFQVPYVTY (113 aa)). An interaction with the cholesterol-anchor of SHH region spans residues 845-854 (ILIVVPEIFL). Cys-860 and Cys-881 form a disulfide bridge.

Interacts with SHH via the cholesterol anchor of the dually lipid-modified SHH (ShhNp). Interacts with PTCH1. Forms homooligomers and heterooligomers with SCUBE1 and SCUBE3. Interacts with VEGFR2. Post-translationally, N-glycosylated. As to expression, expressed in adult heart, lung and testis.

It is found in the secreted. It localises to the cell surface. Functionally, lipid-binding protein required for SHH long-range signaling by binding to the dually lipid-modified SHH (ShhNp) and by promoting ShhNp mobilization, solubilization and release from the cell membrane. Acts by enhancing the proteolytic processing (shedding) of the lipid-modified N- and C- terminal of ShhNp at the cell surface. Synergizes with DISP1 to cause an increase in SHH secretion. Probable cell surface coreceptor for VEGFR2 involved in VEGFR2-mediated angiogenesis. This is Signal peptide, CUB and EGF-like domain-containing protein 2 from Mus musculus (Mouse).